We begin with the raw amino-acid sequence, 493 residues long: Probable cytosol aminopeptidase (493 aa).

Positions 258 and 263 each coordinate Mn(2+). Residue lysine 270 is part of the active site. Aspartate 281, aspartate 340, and glutamate 342 together coordinate Mn(2+). Arginine 344 is an active-site residue.

The protein belongs to the peptidase M17 family. Mn(2+) is required as a cofactor.

The protein localises to the cytoplasm. It carries out the reaction Release of an N-terminal amino acid, Xaa-|-Yaa-, in which Xaa is preferably Leu, but may be other amino acids including Pro although not Arg or Lys, and Yaa may be Pro. Amino acid amides and methyl esters are also readily hydrolyzed, but rates on arylamides are exceedingly low.. The enzyme catalyses Release of an N-terminal amino acid, preferentially leucine, but not glutamic or aspartic acids.. In terms of biological role, presumably involved in the processing and regular turnover of intracellular proteins. Catalyzes the removal of unsubstituted N-terminal amino acids from various peptides. This chain is Probable cytosol aminopeptidase, found in Caulobacter vibrioides (strain ATCC 19089 / CIP 103742 / CB 15) (Caulobacter crescentus).